The following is a 1400-amino-acid chain: DNA-directed RNA polymerase subunit beta' (1400 aa).

Residues Cys-71, Cys-73, Cys-86, and Cys-89 each contribute to the Zn(2+) site. The Mg(2+) site is built by Asp-462, Asp-464, and Asp-466. Zn(2+) is bound by residues Cys-811, Cys-885, Cys-892, and Cys-895.

This sequence belongs to the RNA polymerase beta' chain family. In terms of assembly, the RNAP catalytic core consists of 2 alpha, 1 beta, 1 beta' and 1 omega subunit. When a sigma factor is associated with the core the holoenzyme is formed, which can initiate transcription. The cofactor is Mg(2+). It depends on Zn(2+) as a cofactor.

The enzyme catalyses RNA(n) + a ribonucleoside 5'-triphosphate = RNA(n+1) + diphosphate. Its function is as follows. DNA-dependent RNA polymerase catalyzes the transcription of DNA into RNA using the four ribonucleoside triphosphates as substrates. The sequence is that of DNA-directed RNA polymerase subunit beta' from Brucella suis (strain ATCC 23445 / NCTC 10510).